A 695-amino-acid polypeptide reads, in one-letter code: Lupanine 17-hydroxylase [cytochrome c] (695 aa).

The N-terminal stretch at 1-26 (MSANKNIWIIRLGVAFVCVAIGAAQA) is a signal peptide. Positions 598–677 (AMAESGRHIF…ALQAFILQKA (80 aa)) constitute a Cytochrome c domain. Residues cysteine 612, cysteine 615, and histidine 616 each contribute to the heme c site.

Belongs to the bacterial PQQ dehydrogenase family. In terms of assembly, monomer. Pyrroloquinoline quinone serves as cofactor. Heme c is required as a cofactor.

It localises to the periplasm. The enzyme catalyses lupanine + 2 Fe(III)-[cytochrome c] + H2O = 17-hydroxylupanine + 2 Fe(II)-[cytochrome c] + 2 H(+). In terms of biological role, catalyzes the first reaction in the catabolism of the alkaloid lupanine. It dehydrogenates lupanine, which can then be hydrated to produce 17-hydroxylupanine. The chain is Lupanine 17-hydroxylase [cytochrome c] (luh) from Pseudomonas sp.